A 635-amino-acid chain; its full sequence is Threonine--tRNA ligase (635 aa).

One can recognise a TGS domain in the interval 1–61 (MVSIRLPDGS…DRDAALAIIT (61 aa)). The segment at 242–533 (DHRKLGKQLD…LIEHHAGAMP (292 aa)) is catalytic. Residues C333, H384, and H510 each coordinate Zn(2+).

The protein belongs to the class-II aminoacyl-tRNA synthetase family. As to quaternary structure, homodimer. It depends on Zn(2+) as a cofactor.

The protein resides in the cytoplasm. The enzyme catalyses tRNA(Thr) + L-threonine + ATP = L-threonyl-tRNA(Thr) + AMP + diphosphate + H(+). Catalyzes the attachment of threonine to tRNA(Thr) in a two-step reaction: L-threonine is first activated by ATP to form Thr-AMP and then transferred to the acceptor end of tRNA(Thr). Also edits incorrectly charged L-seryl-tRNA(Thr). The chain is Threonine--tRNA ligase from Burkholderia ambifaria (strain ATCC BAA-244 / DSM 16087 / CCUG 44356 / LMG 19182 / AMMD) (Burkholderia cepacia (strain AMMD)).